We begin with the raw amino-acid sequence, 238 residues long: uncharacterized protein (238 aa).

Transmembrane regions (helical) follow at residues 19–39 (IVIEAFPGTGLVGSIAGFQII), 79–99 (IILFSDIIISPFKINGLAEFI), and 141–161 (YVEIFDFGVVGGMGGNLLIKC).

It localises to the cell membrane. This is an uncharacterized protein from Methanocaldococcus jannaschii (strain ATCC 43067 / DSM 2661 / JAL-1 / JCM 10045 / NBRC 100440) (Methanococcus jannaschii).